The following is a 274-amino-acid chain: MLSKRIIPCLDCDLQVPEGRVVKGVEFKQIRYAGNPVELATKYYEQGADEIVFLDITASHERRSTMADVIEKTVENVFTPICVGGGIREVKDYVAMLKAGADKCSTNTAAIKDPSLINRASEHVGSQACVIGIDAKRRYVENPSESDEHYIVETNDGYCWFDCSIYGGREFTGIDAVKWAIECEERGAGEILLTSMDRDGTKIGYDLELTKTISENVSIPVIASGGVGNPEHIYDSFSKGKADAALAASIFHFDEYPIPQVKNYLKDKNIPIRI.

Residues Asp-11 and Asp-134 contribute to the active site.

Belongs to the HisA/HisF family. Heterodimer of HisH and HisF.

The protein localises to the cytoplasm. It carries out the reaction 5-[(5-phospho-1-deoxy-D-ribulos-1-ylimino)methylamino]-1-(5-phospho-beta-D-ribosyl)imidazole-4-carboxamide + L-glutamine = D-erythro-1-(imidazol-4-yl)glycerol 3-phosphate + 5-amino-1-(5-phospho-beta-D-ribosyl)imidazole-4-carboxamide + L-glutamate + H(+). It functions in the pathway amino-acid biosynthesis; L-histidine biosynthesis; L-histidine from 5-phospho-alpha-D-ribose 1-diphosphate: step 5/9. In terms of biological role, IGPS catalyzes the conversion of PRFAR and glutamine to IGP, AICAR and glutamate. The HisF subunit catalyzes the cyclization activity that produces IGP and AICAR from PRFAR using the ammonia provided by the HisH subunit. The protein is Imidazole glycerol phosphate synthase subunit HisF of Methanosphaera stadtmanae (strain ATCC 43021 / DSM 3091 / JCM 11832 / MCB-3).